The following is a 288-amino-acid chain: Translocon-associated protein subunit alpha (288 aa).

An N-terminal signal peptide occupies residues 1–28 (MFNFGSKILVLFLVAFPCGLISFGRVSA). Residues 29 to 208 (DSESAEDIFP…ELEEGLDGET (180 aa)) lie on the Lumenal side of the membrane. The segment at 34-69 (EDIFPDSTVDEEEEEEEDEVLVEEDQVPGSETEDDI) is disordered. N-linked (GlcNAc...) asparagine glycans are attached at residues N137 and N192. The chain crosses the membrane as a helical span at residues 209 to 229 (IFMYIFLTGLVVLAVFGMYQV). At 230-288 (LESRTRKRFPVKVETGTGGMNGVDISWIPQETLNIMSKASASPKASPRKRTKRAVGVDQ) the chain is on the cytoplasmic side. The disordered stretch occupies residues 267 to 288 (KASASPKASPRKRTKRAVGVDQ).

It belongs to the TRAP-alpha family. In terms of assembly, heterotetramer of TRAP-alpha, TRAP-beta, TRAP-delta and TRAP-gamma. In terms of processing, phosphorylated in its cytoplasmic tail.

It localises to the endoplasmic reticulum membrane. In terms of biological role, TRAP proteins are part of a complex whose function is to bind calcium to the ER membrane and thereby regulate the retention of ER resident proteins. May be involved in the recycling of the translocation apparatus after completion of the translocation process or may function as a membrane-bound chaperone facilitating folding of translocated proteins. This chain is Translocon-associated protein subunit alpha (ssr1), found in Oncorhynchus mykiss (Rainbow trout).